The following is a 273-amino-acid chain: Dermonecrotic toxin LhSicTox-alphaIA2av (273 aa).

Histidine 5 is a catalytic residue. The Mg(2+) site is built by glutamate 25 and aspartate 27. Histidine 41 functions as the Nucleophile in the catalytic mechanism. 2 cysteine pairs are disulfide-bonded: cysteine 45-cysteine 51 and cysteine 47-cysteine 190. Aspartate 85 provides a ligand contact to Mg(2+).

It belongs to the arthropod phospholipase D family. Class II subfamily. Requires Mg(2+) as cofactor. Expressed by the venom gland.

Its subcellular location is the secreted. The catalysed reaction is an N-(acyl)-sphingosylphosphocholine = an N-(acyl)-sphingosyl-1,3-cyclic phosphate + choline. It catalyses the reaction an N-(acyl)-sphingosylphosphoethanolamine = an N-(acyl)-sphingosyl-1,3-cyclic phosphate + ethanolamine. It carries out the reaction a 1-acyl-sn-glycero-3-phosphocholine = a 1-acyl-sn-glycero-2,3-cyclic phosphate + choline. The enzyme catalyses a 1-acyl-sn-glycero-3-phosphoethanolamine = a 1-acyl-sn-glycero-2,3-cyclic phosphate + ethanolamine. Its function is as follows. Dermonecrotic toxins cleave the phosphodiester linkage between the phosphate and headgroup of certain phospholipids (sphingolipid and lysolipid substrates), forming an alcohol (often choline) and a cyclic phosphate. This toxin acts on sphingomyelin (SM). It may also act on ceramide phosphoethanolamine (CPE), lysophosphatidylcholine (LPC) and lysophosphatidylethanolamine (LPE), but not on lysophosphatidylserine (LPS), and lysophosphatidylglycerol (LPG). It acts by transphosphatidylation, releasing exclusively cyclic phosphate products as second products. Induces dermonecrosis, hemolysis, increased vascular permeability, edema, inflammatory response, and platelet aggregation. This is Dermonecrotic toxin LhSicTox-alphaIA2av from Loxosceles hirsuta (Recluse spider).